The following is a 477-amino-acid chain: E3 ubiquitin-protein ligase TRIM17 (477 aa).

Residues 16–66 (CSICLDYFTDPVMTACGHNFCRECIQMSWEKGKGKKGKKKQKGSFPCPECR) form an RING-type zinc finger. The B box-type zinc-finger motif lies at 94–135 (HKRDLCQIHQEPLKLFCQDDQTPICVVCREAQEHRMHRVLPL). 4 residues coordinate Zn(2+): cysteine 99, histidine 102, cysteine 121, and histidine 127. A coiled-coil region spans residues 135-225 (LDEAAREYKL…GKLQDSKASL (91 aa)). Residues 276–475 (AIKTVCRVPG…MVISTVTMWV (200 aa)) form the B30.2/SPRY domain.

It belongs to the TRIM/RBCC family. As to quaternary structure, interacts (via coiled coil) with TRIM44 (via coiled coil). Interacts with TRIM28; this interaction prevents TRIM28 activity on BCL2A1. Interacts with TRIM41; this interaction prevents TRIM41 activity on ZSCAN2. Interacts with BECN1. Interacts with NFATC3 and NFATC4; these interactions prevent NFATC3 and NFATC4 nuclear localization. Post-translationally, auto-ubiquitinated. Expressed almost exclusively in the testis.

It is found in the cytoplasm. The protein resides in the lysosome. It carries out the reaction S-ubiquitinyl-[E2 ubiquitin-conjugating enzyme]-L-cysteine + [acceptor protein]-L-lysine = [E2 ubiquitin-conjugating enzyme]-L-cysteine + N(6)-ubiquitinyl-[acceptor protein]-L-lysine.. The protein operates within protein modification; protein ubiquitination. E3 ubiquitin ligase that plays important roles in the regulation of neuronal apoptosis, selective autophagy or cell proliferation. Stimulates the degradation of kinetochore ZW10 interacting protein ZWINT in a proteasome-dependent manner, leading to negative regulation of cell proliferation. Inhibits autophagic degradation of diverse known targets while contributing to autophagy of midbodies. Autophagy-inhibitory activity involves MCL1, which TRIM17 assembles into complexes with the key autophagy regulator BECN1. Controls neuronal apoptosis by mediating ubiquitination and degradation of MCL1 to initiate neuronal death. In addition, regulates NFAT transcription factors NFATC3 and NFATC4 activities by preventing their nuclear localization, thus inhibiting their transcriptional activities. Decreases TRIM41-mediated degradation of ZSCAN2 thereby stimulating alpha-synuclein/SNCA transcription in neuronal cells. Prevents the E3 ubiquitin-ligase activity of TRIM28 and its interaction with anti-apoptotic BCL2A1, blocking TRIM28 from ubiquitinating BCL2A1. In Rattus norvegicus (Rat), this protein is E3 ubiquitin-protein ligase TRIM17 (Trim17).